The chain runs to 567 residues: Zinc finger protein 512 (567 aa).

Residues 1–32 (MSSRLGAVPATSGPTTFKQQRSTRIVGAKNSR) form a disordered region. Positions 12–23 (SGPTTFKQQRST) are enriched in polar residues. Residues lysine 18 and lysine 84 each participate in a glycyl lysine isopeptide (Lys-Gly) (interchain with G-Cter in SUMO2) cross-link. Residues 86–148 (AATSHVEGSG…QARRIRKEPP (63 aa)) form a disordered region. A compositionally biased stretch (basic residues) spans 119–130 (KKHKLYGRKQRP). A C2H2-type 1 zinc finger spans residues 197–220 (FTCHHCGKQLRSLAGMKYHVMANH). Residue lysine 227 forms a Glycyl lysine isopeptide (Lys-Gly) (interchain with G-Cter in SUMO2) linkage. The C2H2-type 2 zinc finger occupies 287 to 310 (LKCHHCGKPYRSKAGLAYHLRSEH). Lysine 333 participates in a covalent cross-link: Glycyl lysine isopeptide (Lys-Gly) (interchain with G-Cter in SUMO2). The segment at 406-430 (IQCPNQGCEAVYSSVSGLKAHLGSC) adopts a C2H2-type 3; atypical zinc-finger fold. Residues 440 to 463 (YKCLLCQKEFVSESGVKYHINSVH) form a C2H2-type 4 zinc finger. The disordered stretch occupies residues 486–567 (QRQQEEEKRR…PKTNHKRGRK (82 aa)). Residues 495–508 (RQQHRSRRSLRRRQ) are compositionally biased toward basic residues. Residues 523–532 (VGKDQRRNNE) are compositionally biased toward basic and acidic residues. Over residues 556 to 567 (KPPKTNHKRGRK) the composition is skewed to basic residues.

It belongs to the krueppel C2H2-type zinc-finger protein family.

The protein resides in the nucleus. Functionally, may be involved in transcriptional regulation. The protein is Zinc finger protein 512 (ZNF512) of Homo sapiens (Human).